The primary structure comprises 2144 residues: Alpha-protein kinase 2 (2144 aa).

Positions 7-105 constitute an Ig-like 1 domain; the sequence is PERRTLCFLS…ICCSASLEVQ (99 aa). Residues C33 and C98 are joined by a disulfide bond. Disordered stretches follow at residues 425–473, 500–575, 727–775, 845–864, 881–907, 1011–1065, 1316–1340, 1471–1509, 1565–1587, 1629–1696, and 1720–1754; these read ETAK…LQTM, SLAR…GAPG, EDNE…NVGS, QTQG…DGKS, EASE…TLPY, SCEA…PEGQ, DPVE…EMEM, GPGE…ETEV, CGNH…PKGN, ECES…GSGH, and ENSR…PCKA. Residues 500–511 show a composition bias toward basic and acidic residues; that stretch reads SLARERTDEKYP. Basic and acidic residues predominate over residues 853–864; the sequence is RSTDKRSQDGKS. Positions 897-906 are enriched in polar residues; that stretch reads PPSTFSSTLP. Positions 1574-1587 are enriched in polar residues; that stretch reads DLTNTPCTSSPKGN. Composition is skewed to basic and acidic residues over residues 1631 to 1645 and 1732 to 1754; these read ESEK…RDPC and PKFE…PCKA. In terms of domain architecture, Ig-like 2 spans 1759-1847; that stretch reads PVLLKRIQAE…GKVTAEFNLT (89 aa). A disulfide bridge connects residues C1781 and C1831. The Alpha-type protein kinase domain occupies 1874 to 2106; it reads KEDVFNDSYF…YCKMLGLKSL (233 aa). The interval 2109–2144 is disordered; the sequence is NSQKPKKPIVGKGRVPTNATQVKTPESETPPAERKT.

It belongs to the protein kinase superfamily. Alpha-type protein kinase family. ALPK subfamily.

It is found in the basolateral cell membrane. The enzyme catalyses L-seryl-[protein] + ATP = O-phospho-L-seryl-[protein] + ADP + H(+). It carries out the reaction L-threonyl-[protein] + ATP = O-phospho-L-threonyl-[protein] + ADP + H(+). Its function is as follows. Protein kinase that recognizes phosphorylation sites in which the surrounding peptides have an alpha-helical conformation. Regulates cardiac development and cardiomyocyte differentiation by negatively regulating Wnt/beta-catenin signaling. The sequence is that of Alpha-protein kinase 2 from Mus musculus (Mouse).